The primary structure comprises 387 residues: Chaperone protein DnaJ (387 aa).

One can recognise a J domain in the interval 6–70 (DYYETLGVSR…QKRAAYDQYG (65 aa)). A CR-type zinc finger spans residues 143-225 (GKDTKISYDR…CHGTGHEQER (83 aa)). The Zn(2+) site is built by C156, C159, C173, C176, C199, C202, C213, and C216. 4 CXXCXGXG motif repeats span residues 156-163 (CHTCNGSG), 173-180 (CHKCHGSG), 199-206 (CDVCGGTG), and 213-220 (CPTCHGTG).

The protein belongs to the DnaJ family. In terms of assembly, homodimer. It depends on Zn(2+) as a cofactor.

It is found in the cytoplasm. Functionally, participates actively in the response to hyperosmotic and heat shock by preventing the aggregation of stress-denatured proteins and by disaggregating proteins, also in an autonomous, DnaK-independent fashion. Unfolded proteins bind initially to DnaJ; upon interaction with the DnaJ-bound protein, DnaK hydrolyzes its bound ATP, resulting in the formation of a stable complex. GrpE releases ADP from DnaK; ATP binding to DnaK triggers the release of the substrate protein, thus completing the reaction cycle. Several rounds of ATP-dependent interactions between DnaJ, DnaK and GrpE are required for fully efficient folding. Also involved, together with DnaK and GrpE, in the DNA replication of plasmids through activation of initiation proteins. This chain is Chaperone protein DnaJ, found in Lacticaseibacillus paracasei (strain ATCC 334 / BCRC 17002 / CCUG 31169 / CIP 107868 / KCTC 3260 / NRRL B-441) (Lactobacillus paracasei).